The chain runs to 437 residues: Major royal jelly protein 6 (437 aa).

Positions 1-20 (MTNWLLLIVCLSIACQDVTS) are cleaved as a signal peptide. Asparagine 78, asparagine 164, asparagine 181, asparagine 201, and asparagine 324 each carry an N-linked (GlcNAc...) asparagine glycan.

Belongs to the major royal jelly protein family. Found in and secreted from the hypopharyngeal glands of the worker honey bee (at protein level); expression peaks at 20 days post eclosion. Expressed in the spermatheca of adult queen bees (at protein level); Expression levels are higher in mated queens than in virgin queens. Expressed at low level in the brains of adult worker bees. Protein abundance does not seem to correlate with transcript abundance.

The protein resides in the secreted. Its function is as follows. Component of royal jelly, a substance produced in the hypopharyngeal gland containing proteins, free amino acids, fatty acids, sugars and other nutrients, which is fed to developing larvae by worker nurse bees. All larvae are fed some royal jelly (also known as worker jelly) early in their development but it forms the principal source of nutrition for larvae destined to become queen bees. Produced in the spermatheca of adult queen bees, along with other major royal jelly proteins, where it may act as a nutrient supply for sperm stored by mated queens, or be involved in energy metabolism. The chain is Major royal jelly protein 6 from Apis mellifera (Honeybee).